Consider the following 203-residue polypeptide: LexA repressor (203 aa).

The H-T-H motif DNA-binding region spans 32 to 52; the sequence is RAEICTAFGFRSPNAAETHLR. Catalysis depends on for autocatalytic cleavage activity residues Ser-121 and Lys-158.

It belongs to the peptidase S24 family. In terms of assembly, homodimer.

The catalysed reaction is Hydrolysis of Ala-|-Gly bond in repressor LexA.. Represses a number of genes involved in the response to DNA damage (SOS response), including recA and lexA. In the presence of single-stranded DNA, RecA interacts with LexA causing an autocatalytic cleavage which disrupts the DNA-binding part of LexA, leading to derepression of the SOS regulon and eventually DNA repair. The sequence is that of LexA repressor from Aromatoleum aromaticum (strain DSM 19018 / LMG 30748 / EbN1) (Azoarcus sp. (strain EbN1)).